The chain runs to 362 residues: Peptide chain release factor 1 (362 aa).

Residue glutamine 237 is modified to N5-methylglutamine.

The protein belongs to the prokaryotic/mitochondrial release factor family. Post-translationally, methylated by PrmC. Methylation increases the termination efficiency of RF1.

The protein localises to the cytoplasm. In terms of biological role, peptide chain release factor 1 directs the termination of translation in response to the peptide chain termination codons UAG and UAA. The protein is Peptide chain release factor 1 of Vibrio parahaemolyticus serotype O3:K6 (strain RIMD 2210633).